The sequence spans 176 residues: ATP-dependent protease subunit HslV (176 aa).

Residue Thr5 is part of the active site. 3 residues coordinate Na(+): Ala161, Cys164, and Thr167.

The protein belongs to the peptidase T1B family. HslV subfamily. As to quaternary structure, a double ring-shaped homohexamer of HslV is capped on each side by a ring-shaped HslU homohexamer. The assembly of the HslU/HslV complex is dependent on binding of ATP.

It is found in the cytoplasm. The enzyme catalyses ATP-dependent cleavage of peptide bonds with broad specificity.. Allosterically activated by HslU binding. In terms of biological role, protease subunit of a proteasome-like degradation complex believed to be a general protein degrading machinery. The polypeptide is ATP-dependent protease subunit HslV (Caldicellulosiruptor bescii (strain ATCC BAA-1888 / DSM 6725 / KCTC 15123 / Z-1320) (Anaerocellum thermophilum)).